Here is a 647-residue protein sequence, read N- to C-terminus: Protein cueball (647 aa).

Residues 1-22 (MLWCPSVLVPLIAVAACLPVLA) form the signal peptide. Topologically, residues 23–534 (IGTPLEWEFA…CMTPSPWTSN (512 aa)) are extracellular. N-linked (GlcNAc...) asparagine glycans are attached at residues Asn80 and Asn106. 3 LDL-receptor class B repeats span residues 119-166 (RNLF…DVCR), 167-211 (RKLY…DQLS), and 212-257 (DRIF…TNDA). The N-linked (GlcNAc...) asparagine glycan is linked to Asn175. The N-linked (GlcNAc...) asparagine glycan is linked to Asn316. 2 consecutive EGF-like domains span residues 365 to 401 (DEKT…SRCE) and 436 to 473 (EISK…ERCE). Disulfide bonds link Cys376-Cys389, Cys391-Cys400, Cys440-Cys450, Cys444-Cys461, and Cys463-Cys472. N-linked (GlcNAc...) asparagine glycosylation occurs at Asn475. Residues 535–555 (VIIVLVLGIVSCFFLVAVIVH) traverse the membrane as a helical segment. Over 556–647 (GFRRLYKPKR…LIHNMDDDLY (92 aa)) the chain is Cytoplasmic.

This sequence belongs to the cueball family.

Its subcellular location is the cell membrane. In terms of biological role, has a role in spermatogenesis and oogenesis. In Drosophila pseudoobscura pseudoobscura (Fruit fly), this protein is Protein cueball.